The sequence spans 459 residues: NADH-ubiquinone oxidoreductase chain 4 (459 aa).

The next 13 membrane-spanning stretches (helical) occupy residues 22-42, 61-81, 94-113, 114-134, 146-166, 197-217, 225-245, 258-278, 285-304, 308-330, 352-372, 380-400, and 437-457; these read HLSY…LQWL, PIST…ILVS, RTFT…AFSA, LEMM…LIII, AGTY…IALT, WFAL…HLWL, PIAG…YGII, LSYP…LICL, SLIA…AALL, LSIT…LFCL, LLPL…ALPP, LTII…TGLG, and LIMM…QLMT.

This sequence belongs to the complex I subunit 4 family.

It localises to the mitochondrion membrane. The catalysed reaction is a ubiquinone + NADH + 5 H(+)(in) = a ubiquinol + NAD(+) + 4 H(+)(out). Functionally, core subunit of the mitochondrial membrane respiratory chain NADH dehydrogenase (Complex I) that is believed to belong to the minimal assembly required for catalysis. Complex I functions in the transfer of electrons from NADH to the respiratory chain. The immediate electron acceptor for the enzyme is believed to be ubiquinone. This Pelomedusa subrufa (African side-necked turtle) protein is NADH-ubiquinone oxidoreductase chain 4 (MT-ND4).